The following is a 335-amino-acid chain: uncharacterized protein (335 aa).

Disordered regions lie at residues 152-179 (IQLP…TVND) and 252-271 (LDLF…SASL). Ser257 and Ser260 each carry phosphoserine. A compositionally biased stretch (polar residues) spans 257-271 (SPSSENKSTAGSASL).

This is an uncharacterized protein from Schizosaccharomyces pombe (strain 972 / ATCC 24843) (Fission yeast).